The following is a 158-amino-acid chain: Endoribonuclease YbeY (158 aa).

The Zn(2+) site is built by H119, H123, and H129.

It belongs to the endoribonuclease YbeY family. The cofactor is Zn(2+).

It localises to the cytoplasm. Single strand-specific metallo-endoribonuclease involved in late-stage 70S ribosome quality control and in maturation of the 3' terminus of the 16S rRNA. The polypeptide is Endoribonuclease YbeY (Acinetobacter baumannii (strain AB307-0294)).